The following is a 955-amino-acid chain: Protein MEI2-like 3 (955 aa).

A disordered region spans residues 64–83 (IQPNGANHAGDPETPGGQAF). RRM domains follow at residues 270 to 343 (RTLV…FSFP) and 355 to 428 (GMLV…LSQH). 2 disordered regions span residues 436-465 (RQQH…KLGT) and 897-955 (NAGD…LEQT). A compositionally biased stretch (polar residues) spans 935 to 955 (DQESNSVGTANSTCRTTLEQT).

In terms of biological role, probable RNA-binding protein that may play a role in growth regulation. In Oryza sativa subsp. japonica (Rice), this protein is Protein MEI2-like 3 (ML3).